Consider the following 1008-residue polypeptide: PAN2-PAN3 deadenylation complex catalytic subunit PAN2 (1008 aa).

5 WD repeats span residues 29–68, 110–149, 158–198, 200–236, and 277–316; these read GQLT…PYSR, PSLG…VTRV, HMAG…FSDV, VQDN…AMAP, and AEVA…SFAE. The segment at 314–449 is linker; the sequence is FAEFSAPTAF…TCTEASMSSK (136 aa). The region spanning 450-755 is the USP domain; that stretch reads KVPRLYRKLE…RTVMMVYAVG (306 aa). Positions 808–976 constitute an Exonuclease domain; sequence AIDAEFVVLK…EDSHTALLLY (169 aa). A divalent metal cation-binding residues include aspartate 810, glutamate 812, aspartate 915, and aspartate 968.

Belongs to the peptidase C19 family. PAN2 subfamily. Forms a heterotrimer with an asymmetric homodimer of the regulatory subunit PAN3 to form the poly(A)-nuclease (PAN) deadenylation complex. The cofactor is a divalent metal cation.

Its subcellular location is the cytoplasm. The enzyme catalyses Exonucleolytic cleavage of poly(A) to 5'-AMP.. With respect to regulation, positively regulated by the regulatory subunit PAN3. Its function is as follows. Catalytic subunit of the poly(A)-nuclease (PAN) deadenylation complex, one of two cytoplasmic mRNA deadenylases involved in mRNA turnover. PAN specifically shortens poly(A) tails of RNA and the activity is stimulated by poly(A)-binding protein PAB1. PAN deadenylation is followed by rapid degradation of the shortened mRNA tails by the CCR4-NOT complex. Deadenylated mRNAs are then degraded by two alternative mechanisms, namely exosome-mediated 3'-5' exonucleolytic degradation, or deadenylation-dependent mRNA decaping and subsequent 5'-3' exonucleolytic degradation by XRN1. May also be involved in post-transcriptional maturation of mRNA poly(A) tails. The polypeptide is PAN2-PAN3 deadenylation complex catalytic subunit PAN2 (Yarrowia lipolytica (strain CLIB 122 / E 150) (Yeast)).